The chain runs to 310 residues: Tyrosine recombinase XerC (310 aa).

In terms of domain architecture, Core-binding (CB) spans 22-103; the sequence is SQMLEAIEDF…SVKSFSTWAV (82 aa). The Tyr recombinase domain occupies 124-304; it reads NLPRVLGEVQ…SSQRLLEAFR (181 aa). Catalysis depends on residues R165, K189, H256, R259, and H282. Y291 functions as the O-(3'-phospho-DNA)-tyrosine intermediate in the catalytic mechanism.

Belongs to the 'phage' integrase family. XerC subfamily. As to quaternary structure, forms a cyclic heterotetrameric complex composed of two molecules of XerC and two molecules of XerD.

It is found in the cytoplasm. In terms of biological role, site-specific tyrosine recombinase, which acts by catalyzing the cutting and rejoining of the recombining DNA molecules. The XerC-XerD complex is essential to convert dimers of the bacterial chromosome into monomers to permit their segregation at cell division. It also contributes to the segregational stability of plasmids. The polypeptide is Tyrosine recombinase XerC (Corynebacterium efficiens (strain DSM 44549 / YS-314 / AJ 12310 / JCM 11189 / NBRC 100395)).